The following is a 101-amino-acid chain: Large ribosomal subunit protein eL21 (101 aa).

Over residues 1–18 (MVKHSKGYRTRSRSLLRK) the composition is skewed to basic residues. A disordered region spans residues 1-24 (MVKHSKGYRTRSRSLLRKSPRERG).

Belongs to the eukaryotic ribosomal protein eL21 family.

This is Large ribosomal subunit protein eL21 (rpl21e) from Saccharolobus solfataricus (strain ATCC 35092 / DSM 1617 / JCM 11322 / P2) (Sulfolobus solfataricus).